The sequence spans 87 residues: uncharacterized protein (87 aa).

Positions 52-87 are disordered; sequence KWQPRPDANNSDTTTSTEDSTTDTETEYSTTEDELA. A compositionally biased stretch (acidic residues) spans 71-87; that stretch reads STTDTETEYSTTEDELA.

This is an uncharacterized protein from Autographa californica nuclear polyhedrosis virus (AcMNPV).